We begin with the raw amino-acid sequence, 113 residues long: UPF0145 protein SynWH7803_1684 (113 aa).

Belongs to the UPF0145 family.

The polypeptide is UPF0145 protein SynWH7803_1684 (Synechococcus sp. (strain WH7803)).